Here is a 763-residue protein sequence, read N- to C-terminus: uncharacterized protein (763 aa).

One can recognise a TR mART core domain in the interval 380–607 (DSVLNPFNTN…YNIKVITMRL (228 aa)). A helical membrane pass occupies residues 684 to 700 (SYVSIYALLCPLLTNIY).

It localises to the membrane. This is an uncharacterized protein from Acanthamoeba polyphaga mimivirus (APMV).